The sequence spans 204 residues: MGAYTYVSELWRKKQSDVMRFLQRVRCWEYRQLPSIVRVTRPTRPDKARRLGYKAKQGYVVYRVRVKRGGRKRPVPKGIVYGKPTNQGVTQLKFQRTKRSVAEERAGRKLGGLRVLNSYWINEDSTYKYFEVILVDQAHAAIRNDPRINWICNPVHKHRELRGLTSAGKKYRGLRGRGHLHNKAPPSRRANWKRNQTLSLPRYR.

Basic residues predominate over residues 172 to 182 (RGLRGRGHLHN). The disordered stretch occupies residues 172 to 204 (RGLRGRGHLHNKAPPSRRANWKRNQTLSLPRYR). Polar residues predominate over residues 193-204 (KRNQTLSLPRYR).

Belongs to the eukaryotic ribosomal protein eL15 family.

This Petunia hybrida (Petunia) protein is Large ribosomal subunit protein eL15 (RPL15).